Here is a 780-residue protein sequence, read N- to C-terminus: E3 SUMO-protein ligase gei-17 (780 aa).

The segment at 181 to 210 (APLHSSFPNHGRSSQQSLQKSEKSNRPKKM) is disordered. The 165-residue stretch at 203 to 367 (KSNRPKKMYA…AAGVYFVHRV (165 aa)) folds into the PINIT domain. The SP-RING-type zinc-finger motif lies at 400–485 (GEDDIAMDRL…LAKVDKNTTE (86 aa)). The Zn(2+) site is built by C431, H433, C454, and C457. The segment covering 519-530 (GTASCSSTNGNG) has biased composition (polar residues). 3 disordered regions span residues 519-544 (GTASCSSTNGNGLANEAAKKKPADDD), 560-594 (IMNSLNDSFSPGRHTASAELAAQKTPPQQKKKTKD), and 732-755 (QQHHLQQQQQQQQSPQIMSPSFYA). Over residues 732-749 (QQHHLQQQQQQQQSPQIM) the composition is skewed to low complexity.

It belongs to the PIAS family. In terms of assembly, may interact with gex-3.

It participates in protein modification; protein sumoylation. Functionally, functions as an E3-type smo-1 ligase. Mediates smo-1 conjugation to air-2 in vitro and is required for proper chromosome alignment. In the early embryo, specifically suppresses checkpoint activation in response to DNA damage, maybe by promoting mus-101 sumoylation. In embryos, plays a role in determining telomere localization in the nucleus. Acts with pie-1 to promote piRNA-mediated silencing and fertility in the adult germline. The chain is E3 SUMO-protein ligase gei-17 from Caenorhabditis elegans.